Consider the following 306-residue polypeptide: Cysteine synthase (306 aa).

Lysine 46 is modified (N6-(pyridoxal phosphate)lysine). Pyridoxal 5'-phosphate-binding positions include asparagine 76, 180 to 184, and serine 267; that span reads GSGGT.

This sequence belongs to the cysteine synthase/cystathionine beta-synthase family. As to quaternary structure, homodimer. Requires pyridoxal 5'-phosphate as cofactor.

It catalyses the reaction O-acetyl-L-serine + hydrogen sulfide = L-cysteine + acetate. It participates in amino-acid biosynthesis; L-cysteine biosynthesis; L-cysteine from L-serine: step 2/2. This is Cysteine synthase (cysM) from Helicobacter pylori (strain ATCC 700392 / 26695) (Campylobacter pylori).